The following is a 1066-amino-acid chain: Ankyrin repeat protein nuc-2 (1066 aa).

Residues 1–166 (MKFGKQIQKR…KSKTKELYLS (166 aa)) form the SPX domain. ANK repeat units lie at residues 268-298 (RVTRTFLASINEGSLEALKVLLDTGLVDIQS), 336-366 (YGRVPLHYASMHGRLDMIDALLNASPKTINL), 370-399 (DNFTPLVHSIVRNHLECVGRLLERSARIDP), 403-432 (TDHVPLNLACQHGSVAIVELLLKHGAKILA), 435-465 (EGLYPQHLVARSGQTPEILVLLKQYGADLDQ), 470-499 (YGWTPLVHAASEGNVPCLQALLETGADPNI), and 503-532 (KDLPAMYYAAWEGHLECMKLLTPAKKEKAA). In terms of domain architecture, GP-PDE spans 717–1048 (ITDFETYWKA…DPFPKLPKGV (332 aa)). A disordered region spans residues 923-963 (KQQQQGSCSKGDGDEDMGGTTAASRREAADERTLQSDGRRT). Over residues 946–962 (SRREAADERTLQSDGRR) the composition is skewed to basic and acidic residues.

In terms of biological role, controls phosphorus acquisition. In Neurospora crassa (strain ATCC 24698 / 74-OR23-1A / CBS 708.71 / DSM 1257 / FGSC 987), this protein is Ankyrin repeat protein nuc-2 (nuc-2).